The sequence spans 266 residues: Calpain small subunit 1 (266 aa).

M1 bears the N-acetylmethionine mark. Position 6 is a phosphoserine (S6). The EF-hand 1; atypical domain maps to 94–128 (EEVRQFRRLFAQLAGDDMEVSATELMNILNKVVTR). Positions 107, 110, 112, 117, 135, 150, 152, 154, 156, and 161 each coordinate Ca(2+). 4 EF-hand domains span residues 137-170 (FGID…NNIK), 167-202 (NNIK…AGFH), 203-231 (LNEH…ISCL), and 232-266 (VRLD…TMYS). K177 carries the post-translational modification N6-acetyllysine. Positions 180, 182, 184, 186, 191, and 223 each coordinate Ca(2+).

As to quaternary structure, homodimer or heterodimer of a large (catalytic) and a small (regulatory) subunit. In presence of calcium, the heterodimer dissociates.

It is found in the cytoplasm. The protein localises to the cell membrane. Regulatory subunit of the calcium-regulated non-lysosomal thiol-protease which catalyzes limited proteolysis of substrates involved in cytoskeletal remodeling and signal transduction. Essential for embryonic development. The polypeptide is Calpain small subunit 1 (CAPNS1) (Sus scrofa (Pig)).